A 246-amino-acid polypeptide reads, in one-letter code: E3 ubiquitin-protein ligase MARCHF2 (246 aa).

The RING-CH-type zinc finger occupies 56–116 (GTQSDGPICR…ELCHTEFAVE (61 aa)). 8 residues coordinate Zn(2+): cysteine 64, cysteine 67, cysteine 80, cysteine 82, histidine 90, cysteine 93, cysteine 106, and cysteine 109. 2 helical membrane-spanning segments follow: residues 138-158 (LFCD…SGWL) and 175-195 (AVGL…WTLV).

It localises to the endoplasmic reticulum membrane. It is found in the lysosome membrane. Its subcellular location is the endosome membrane. The enzyme catalyses S-ubiquitinyl-[E2 ubiquitin-conjugating enzyme]-L-cysteine + [acceptor protein]-L-lysine = [E2 ubiquitin-conjugating enzyme]-L-cysteine + N(6)-ubiquitinyl-[acceptor protein]-L-lysine.. It functions in the pathway protein modification; protein ubiquitination. E3 ubiquitin-protein ligase which may be involved in endosomal trafficking. E3 ubiquitin ligases accept ubiquitin from an E2 ubiquitin-conjugating enzyme in the form of a thioester and then directly transfer the ubiquitin to targeted substrates. The chain is E3 ubiquitin-protein ligase MARCHF2 (marchf2) from Xenopus laevis (African clawed frog).